The sequence spans 402 residues: Type II NADH:quinone oxidoreductase (402 aa).

FAD is bound by residues 12–16, 39–40, and Val-83; these read GAGYA and NK. The active site involves Glu-172. Residues Asp-302, 319-320, and Lys-379 contribute to the FAD site; that span reads AQ.

This sequence belongs to the NADH dehydrogenase family. The cofactor is FAD.

Its subcellular location is the cell membrane. It carries out the reaction a quinone + NADH + H(+) = a quinol + NAD(+). Alternative, nonproton pumping NADH:quinone oxidoreductase that delivers electrons to the respiratory chain by oxidation of NADH and reduction of quinones, and contributes to the regeneration of NAD(+). The protein is Type II NADH:quinone oxidoreductase of Staphylococcus saprophyticus subsp. saprophyticus (strain ATCC 15305 / DSM 20229 / NCIMB 8711 / NCTC 7292 / S-41).